Reading from the N-terminus, the 230-residue chain is MGQKVHPNGIRLGITKAFSSTWYAGKKDFAANLFSDFEIRKFLTEKLKNASLSKITIERPAKSVRVTIHTARPGVVIGKKGEDVEKLRTAIAKMAGVPAQINISEVRKPELDAKLVADSISSQLERRVMFRRAMKRAVQNAMRLGAKGIKVQVGGRLGGAEIARSEWYREGRVPLHTLRADIDYSTSEAHTVYGIIGVKVWIFKGEVLGGLPLQVEEQQPSKPKRKSRGK.

The KH type-2 domain maps to 39-107; the sequence is IRKFLTEKLK…PAQINISEVR (69 aa).

Belongs to the universal ribosomal protein uS3 family. Part of the 30S ribosomal subunit. Forms a tight complex with proteins S10 and S14.

Its function is as follows. Binds the lower part of the 30S subunit head. Binds mRNA in the 70S ribosome, positioning it for translation. The protein is Small ribosomal subunit protein uS3 of Psychromonas ingrahamii (strain DSM 17664 / CCUG 51855 / 37).